The chain runs to 4763 residues: Nonribosomal peptide synthetase sidC (4763 aa).

Residues 1-24 (MAGTANPADEGLTGPTETTNHINS) form a disordered region. Residues 15–24 (PTETTNHINS) are compositionally biased toward polar residues. The interval 296-815 (STVAEHSTLT…SSGKVDRNSI (520 aa)) is adenylation 1. Residues 853–930 (EKALELRTLV…GLLTLILNGK (78 aa)) form the Carrier 1 domain. The residue at position 890 (serine 890) is an O-(pantetheine 4'-phosphoryl)serine. Positions 1003–1396 (TRSYIYHSVI…DIIAFILQNP (394 aa)) are condensation 1. The interval 1398–1951 (GDFENALLYT…AKTDRRALQA (554 aa)) is adenylation 2. The 77-residue stretch at 1979–2055 (LVASDAMEKI…DLARLCTSSS (77 aa)) folds into the Carrier 2 domain. Serine 2016 bears the O-(pantetheine 4'-phosphoryl)serine mark. The condensation 2 stretch occupies residues 2092–2423 (TPIQESLLSE…HIHAREVRRM (332 aa)). An adenylation 3 region spans residues 2556–3070 (ELNAREHPEW…MSGKANIKEL (515 aa)). In terms of domain architecture, Carrier 3 spans 3099-3175 (RPLSSDEEAV…QLAQLPRKST (77 aa)). Position 3136 is an O-(pantetheine 4'-phosphoryl)serine (serine 3136). A condensation 3 region spans residues 3217–3626 (PLQEGLVARS…DDIALDSFSL (410 aa)). Residues 3647–3720 (SATETKIRDL…ALAEHVDERS (74 aa)) form the Carrier 4 domain. Serine 3681 bears the O-(pantetheine 4'-phosphoryl)serine mark. The condensation 4 stretch occupies residues 3761–4093 (TPLQAGMITR…SLFDTLFVFQ (333 aa)). The region spanning 4204–4277 (PAHESIIRDV…GISARIISPV (74 aa)) is the Carrier 5 domain. An O-(pantetheine 4'-phosphoryl)serine modification is found at serine 4238. Positions 4344–4593 (ERIDSGKLEE…PCLNVTPFTF (250 aa)) are condensation 5.

Belongs to the NRP synthetase family.

The protein operates within siderophore biosynthesis. Functionally, nonribosomal peptide synthase; part of the siderophore biosynthetic pathway. Aspergillus fumigatus produces four types of siderophores, low-molecular-mass iron chelators, including excreted fusarinine C (FsC) and triacetylfusarinine C (TAFC) for iron uptake; and intacellular ferricrocin (FC) for hyphal and hydroxyferricrocin (HFC) for conidial iron distribution and storage. TAFC consists of three N(2)-acetyl-N(5)-anhydromevalonyl-N(5)-hydroxyornithine residues cyclically linked by ester bonds; FC is a cyclic hexapeptide with the structure Gly-Ser-Gly-(N(5)-acetyl-N(5)-hydroxyornithine)x3. The biosynthesis of all four siderophores depends on the hydroxylation of ornithine, catalyzed by the monooxygenase sidA. Subsequently, the pathways for biosynthesis of extra- and intracellular siderophores split. For biosynthesis of extracellular siderophores, the transacylase sidF transfers anhydromevalonyl to N(5)-hydroxyornithine. The required anhydromevalonyl-CoA moiety is derived from mevalonate by CoA ligation and dehydration catalyzed by sidI and sidH respectively. The acetylation of N(5)-hydroxyornithine for FC biosynthesis involves the constitutively expressed sidL. FC is hydroxylated to HFC by an as yet uncharacterized enzyme during conidiation. Assembly of fusarinine C (FsC) and FC is catalyzed by two different nonribosomal peptide synthetases (NRPS), sidD and sidC respectively. Subsequently, sidG catalyzes N2-acetylation of FsC for forming TAFC. Both extra- and intracellular siderophores are crucial for growth during iron limitation and virulence. This Aspergillus fumigatus (strain ATCC MYA-4609 / CBS 101355 / FGSC A1100 / Af293) (Neosartorya fumigata) protein is Nonribosomal peptide synthetase sidC.